The sequence spans 300 residues: Glucose and ribitol dehydrogenase homolog (300 aa).

Over residues 1-14 (MASQQFPPQNQETQ) the composition is skewed to polar residues. The disordered stretch occupies residues 1 to 23 (MASQQFPPQNQETQPGKEHAMDP). An NAD(+)-binding site is contributed by 44–68 (IVTGGDSGIGRAVCLCFALEGATVA). Position 192 (S192) interacts with substrate. Y205 (proton acceptor) is an active-site residue.

It belongs to the short-chain dehydrogenases/reductases (SDR) family.

Functionally, may act as a short alcohol-polyol-sugar dehydrogenase possibly related to carbohydrate metabolism and the acquisition of desiccation tolerance. May also be involved in signal transduction. This Oryza sativa subsp. japonica (Rice) protein is Glucose and ribitol dehydrogenase homolog.